Reading from the N-terminus, the 93-residue chain is DNA-binding protein HU 1 (93 aa).

Belongs to the bacterial histone-like protein family. Homodimer.

It localises to the cytoplasm. Its subcellular location is the nucleoid. In terms of biological role, histone-like DNA-binding protein which is capable of wrapping DNA to stabilize it, and thus to prevent its denaturation under extreme environmental conditions. This chain is DNA-binding protein HU 1 (hup1), found in Streptomyces coelicolor (strain ATCC BAA-471 / A3(2) / M145).